A 400-amino-acid chain; its full sequence is Probable peptidoglycan D,D-transpeptidase PenA (400 aa).

A disordered region spans residues 1-21; sequence NIDGKGQEGLELSREDSLRGE. Serine 128 serves as the catalytic Acyl-ester intermediate.

The protein belongs to the transpeptidase family. FtsI subfamily.

The protein resides in the cell inner membrane. The enzyme catalyses Preferential cleavage: (Ac)2-L-Lys-D-Ala-|-D-Ala. Also transpeptidation of peptidyl-alanyl moieties that are N-acyl substituents of D-alanine.. It participates in cell wall biogenesis; peptidoglycan biosynthesis. In terms of biological role, catalyzes cross-linking of the peptidoglycan cell wall at the division septum. The protein is Probable peptidoglycan D,D-transpeptidase PenA of Neisseria flavescens.